Consider the following 448-residue polypeptide: N-succinylarginine dihydrolase (448 aa).

Substrate is bound by residues 20–29, asparagine 111, and 138–139; these read AGLLFGNEAS and HR. Glutamate 175 is an active-site residue. Arginine 213 is a substrate binding site. Residue histidine 249 is part of the active site. Substrate contacts are provided by aspartate 251 and asparagine 360. The active-site Nucleophile is the cysteine 366.

It belongs to the succinylarginine dihydrolase family. As to quaternary structure, homodimer.

It carries out the reaction N(2)-succinyl-L-arginine + 2 H2O + 2 H(+) = N(2)-succinyl-L-ornithine + 2 NH4(+) + CO2. It functions in the pathway amino-acid degradation; L-arginine degradation via AST pathway; L-glutamate and succinate from L-arginine: step 2/5. In terms of biological role, catalyzes the hydrolysis of N(2)-succinylarginine into N(2)-succinylornithine, ammonia and CO(2). This is N-succinylarginine dihydrolase from Shigella dysenteriae serotype 1 (strain Sd197).